The primary structure comprises 300 residues: B1 kinase (300 aa).

The Protein kinase domain maps to 16-282 (WVVGPLIGKG…ITMVNSLTYF (267 aa)). ATP contacts are provided by residues 22-30 (IGKGGFGSI) and Lys45. The active-site Proton acceptor is the Asp147.

Belongs to the protein kinase superfamily. Ser/Thr protein kinase family. Poxviruses subfamily. Interacts with host JIP1; this interaction increases the amount of MAPK bound to JIP1 and subsequently increases the activity of transcription factors, such as JUN, that respond to these complexes. Interacts with protein OPG198; this interaction inhibits the repressive activity of OPG198 pseudokinase on viral replication factory formation. The cofactor is Mg(2+). Post-translationally, autophosphorylated.

Its subcellular location is the virion. It is found in the host cytoplasm. It carries out the reaction L-seryl-[protein] + ATP = O-phospho-L-seryl-[protein] + ADP + H(+). The catalysed reaction is L-threonyl-[protein] + ATP = O-phospho-L-threonyl-[protein] + ADP + H(+). Functionally, essential serine/threonine-protein kinase that plays different role in the viral life cycle. Phosphorylates the host small ribosomal protein RACK1 thereby customizing the ribosomes to a state optimal for viral mRNAs (which contain poly-A leaders) but not for host mRNAs. Facilitates viral DNA replication by inhibiting host BANF1, a cellular host defense responsive to foreign DNA. Phosphorylates host BANF1 on serine and threonine residues; this leads to BANF1 relocalization to the cytoplasm, loss of dimerization and impaired DNA binding activity. Indeed, BANF1 activity depends on its DNA-binding property which is blocked by VPK1-mediated phosphorylation. Required for viral intermediate genes expression, probably by inhibiting host BANF1. Modulates cellular responses via host JUN by two different mechanisms, either by direct phosphorylation or by modulation of upstream JIP1-MAPK complexes. Seems to participate in the accumulation/processing of late proteins and thus in virion maturation. In addition, inhibits B12 repressive activity on viral DNA replication via a phosphorylation-dependent mechanism. The chain is B1 kinase (OPG187) from Bos taurus (Bovine).